The following is a 409-amino-acid chain: Probable aspartate/prephenate aminotransferase (409 aa).

The L-aspartate site is built by glycine 39, tryptophan 125, and asparagine 175. At lysine 239 the chain carries N6-(pyridoxal phosphate)lysine. Arginine 375 lines the L-aspartate pocket.

Belongs to the class-I pyridoxal-phosphate-dependent aminotransferase family. As to quaternary structure, homodimer. Requires pyridoxal 5'-phosphate as cofactor.

It is found in the cytoplasm. The catalysed reaction is L-aspartate + 2-oxoglutarate = oxaloacetate + L-glutamate. The enzyme catalyses L-arogenate + 2-oxoglutarate = prephenate + L-glutamate. Its function is as follows. Catalyzes the reversible conversion of aspartate and 2-oxoglutarate to glutamate and oxaloacetate. Can also transaminate prephenate in the presence of glutamate. This chain is Probable aspartate/prephenate aminotransferase (aatA), found in Rickettsia felis (strain ATCC VR-1525 / URRWXCal2) (Rickettsia azadi).